A 140-amino-acid polypeptide reads, in one-letter code: Transcription antitermination protein NusB (140 aa).

This sequence belongs to the NusB family.

Involved in transcription antitermination. Required for transcription of ribosomal RNA (rRNA) genes. Binds specifically to the boxA antiterminator sequence of the ribosomal RNA (rrn) operons. The chain is Transcription antitermination protein NusB from Streptococcus pneumoniae serotype 2 (strain D39 / NCTC 7466).